Here is a 507-residue protein sequence, read N- to C-terminus: Maturase K (507 aa).

The protein belongs to the intron maturase 2 family. MatK subfamily.

It is found in the plastid. The protein localises to the chloroplast. Usually encoded in the trnK tRNA gene intron. Probably assists in splicing its own and other chloroplast group II introns. This chain is Maturase K, found in Ranunculus acris (Meadow buttercup).